Here is a 65-residue protein sequence, read N- to C-terminus: Large ribosomal subunit protein bL35 (65 aa).

2 disordered regions span residues 1 to 23 (MPKL…GGFK) and 36 to 65 (MTTK…MPYA). Residues 54–65 (DTTSLVQQMPYA) are compositionally biased toward polar residues.

This sequence belongs to the bacterial ribosomal protein bL35 family.

This chain is Large ribosomal subunit protein bL35, found in Francisella tularensis subsp. tularensis (strain FSC 198).